Consider the following 3096-residue polypeptide: Cilia- and flagella-associated protein 54 (3096 aa).

Positions 1-45 (MAAQGSPSSSPSDDSTTSGSLPELPPTSTATSRSPPESKGSSRSS) are enriched in low complexity. 2 disordered regions span residues 1–46 (MAAQ…RSSL) and 1248–1267 (SNEQ…LKTK).

Belongs to the CFAP54 family.

Its subcellular location is the cytoplasm. The protein localises to the cytoskeleton. It localises to the cilium axoneme. Required for assembly and function of cilia and flagella. The polypeptide is Cilia- and flagella-associated protein 54 (Homo sapiens (Human)).